Here is a 251-residue protein sequence, read N- to C-terminus: Cobalt transport protein CbiM (251 aa).

Positions methionine 1–alanine 27 are cleaved as a signal peptide. The next 6 helical transmembrane spans lie at leucine 35–isoleucine 55, glycine 66–leucine 86, leucine 103–phenylalanine 123, glycine 131–alanine 151, tryptophan 166–threonine 186, and valine 208–phenylalanine 228.

It belongs to the CbiM family. Forms an energy-coupling factor (ECF) transporter complex composed of an ATP-binding protein (A component, CbiO), a transmembrane protein (T component, CbiQ) and 2 possible substrate-capture proteins (S components, CbiM and CbiN) of unknown stoichimetry.

It localises to the cell membrane. It participates in cofactor biosynthesis; adenosylcobalamin biosynthesis. Functionally, part of the energy-coupling factor (ECF) transporter complex CbiMNOQ involved in cobalt import. In Acetohalobium arabaticum (strain ATCC 49924 / DSM 5501 / Z-7288), this protein is Cobalt transport protein CbiM.